A 111-amino-acid polypeptide reads, in one-letter code: Phosphoribosyl-ATP pyrophosphatase (111 aa).

It belongs to the PRA-PH family.

It is found in the cytoplasm. It carries out the reaction 1-(5-phospho-beta-D-ribosyl)-ATP + H2O = 1-(5-phospho-beta-D-ribosyl)-5'-AMP + diphosphate + H(+). It functions in the pathway amino-acid biosynthesis; L-histidine biosynthesis; L-histidine from 5-phospho-alpha-D-ribose 1-diphosphate: step 2/9. This chain is Phosphoribosyl-ATP pyrophosphatase, found in Pseudomonas paraeruginosa (strain DSM 24068 / PA7) (Pseudomonas aeruginosa (strain PA7)).